The following is a 460-amino-acid chain: MTQSQTVTVDQQEILNRANEVEAPMADPPTDVPITPCELTAAKNAAQQLVLSADNMREYLAAGAKERQRLATSLRNAAKAYGEVDEEAATALDNDGEGTVQAESAGAVGGDSSAELTDTPRVATAGEPNFMDLKEAARKLETGDQGASLAHFADGWNTFNLTLQGDVKRFRGFDNWEGDAATACEASLDQQRQWILHMAKLSAAMAKQAQYVAQLHVWARREHPTYEDIVGLERLYAENPSARDQILPVYAEYQQRSEKVLTEYNNKAALEPVNPPKPPPAIKIDPPPPPQEQGLIPGFLMPPSDGSGVTPGTGMPAAPMVPPTGSPGGGLPADTAAQLTSAGREAAALSGDVAVKAASLGGGGGGGVPSAPLGSAIGGAESVRPAGAGDIAGLGQGRAGGGAALGGGGMGMPMGAAHQGQGGAKSKGSQQEDEALYTEDRAWTEAVIGNRRRQDSKESK.

3 disordered regions span residues 92–116 (LDNDGEGTVQAESAGAVGGDSSAEL), 303–335 (PSDGSGVTPGTGMPAAPMVPPTGSPGGGLPADT), and 405–441 (LGGGGMGMPMGAAHQGQGGAKSKGSQQEDEALYTEDR).

Post-translationally, cleaved in the C-terminal region by MycP1.

The protein localises to the secreted. The protein is ESX-1 secretion-associated protein EspB of Mycobacterium tuberculosis (strain CDC 1551 / Oshkosh).